The chain runs to 441 residues: UBX domain-containing protein 6 (441 aa).

The tract at residues Met1–Ala10 is mediates interaction with LMAN1. Residue Lys2 is modified to N-acetylalanine. Disordered stretches follow at residues Lys13–Ile79 and Leu87–Ser106. The span at Lys22–Pro36 shows a compositional bias: basic and acidic residues. The interval Glu51–Leu63 is VCP/p97-interacting motif (VIM). The span at Ala52–Ala61 shows a compositional bias: low complexity. Residue Ser96 is modified to Phosphoserine. The PUB domain occupies Val175–Glu244. The UBX domain occupies Arg332–Phe408.

In terms of assembly, interacts with VCP through the PUB domain (via C-terminus) and VIM motif (via N-terminus); the interaction is direct. Forms a ternary complex with CAV1 and VCP. Interacts with SYVN1. Interacts with HERPUD1. Interacts with VCPKMT. May interact with DERL1. Interacts with PLAA, VCP and YOD1; may form a complex involved in macroautophagy. Interacts with LMAN1. As to expression, enhanced expression in testis.

Its subcellular location is the cytoplasm. It is found in the cytosol. The protein resides in the membrane. It localises to the nucleus. The protein localises to the cytoskeleton. Its subcellular location is the microtubule organizing center. It is found in the centrosome. The protein resides in the early endosome membrane. It localises to the late endosome membrane. The protein localises to the lysosome membrane. Functionally, may negatively regulate the ATPase activity of VCP, an ATP-driven segregase that associates with different cofactors to control a wide variety of cellular processes. As a cofactor of VCP, it may play a role in the transport of CAV1 to lysosomes for degradation. It may also play a role in endoplasmic reticulum-associated degradation (ERAD) of misfolded proteins. Together with VCP and other cofactors, it may play a role in macroautophagy, regulating for instance the clearance of damaged lysosomes. The chain is UBX domain-containing protein 6 from Homo sapiens (Human).